Consider the following 292-residue polypeptide: 2,3-dihydroxybenzoate decarboxylase (292 aa).

Residue cysteine 263 is part of the active site.

Belongs to the metallo-dependent hydrolases superfamily. As to quaternary structure, homotetramer.

The enzyme catalyses 2,3-dihydroxybenzoate + H(+) = catechol + CO2. It participates in aromatic compound metabolism; benzoate degradation via hydroxylation. This Aspergillus niger protein is 2,3-dihydroxybenzoate decarboxylase.